The chain runs to 133 residues: Small ribosomal subunit protein uS15 (133 aa).

The protein belongs to the universal ribosomal protein uS15 family. Part of the 30S ribosomal subunit.

The polypeptide is Small ribosomal subunit protein uS15 (Methanosphaera stadtmanae (strain ATCC 43021 / DSM 3091 / JCM 11832 / MCB-3)).